Here is a 193-residue protein sequence, read N- to C-terminus: Sorting nexin-22 (193 aa).

Residues 1-21 form a disordered region; it reads MLEVHIPSVGPEAEGPRQSPE. Residues 1–118 form the PX domain; that stretch reads MLEVHIPSVG…HFPTDPKASN (118 aa). Residues Arg-43, Ser-45, Lys-66, and Arg-79 each contribute to the a 1,2-diacyl-sn-glycero-3-phospho-(1D-myo-inositol-3-phosphate) site.

This sequence belongs to the sorting nexin family. In terms of assembly, (Microbial infection) Interacts with P.falciparum (strain 3D7) CK1. As to expression, expressed in erythrocytes (at protein level).

The protein resides in the cytoplasmic vesicle membrane. May be involved in several stages of intracellular trafficking. Interacts with membranes containing phosphatidylinositol 3-phosphate (PtdIns(3P)). This Homo sapiens (Human) protein is Sorting nexin-22 (SNX22).